A 93-amino-acid chain; its full sequence is Protein FMP16, mitochondrial (93 aa).

The N-terminal 25 residues, 1–25 (MLRTTFLRTPRQLMRKSPRASFSIV), are a transit peptide targeting the mitochondrion. Residues 30–93 (FPHLKNNQDE…EQNRPDDGVY (64 aa)) are disordered. Residues 35–93 (NNQDEAEKKEQGLFDSNKKRLDTLEHGKNPDYKQPGMEDLKKKGDDARIEQNRPDDGVY) are compositionally biased toward basic and acidic residues.

It is found in the mitochondrion. This Saccharomyces cerevisiae (strain ATCC 204508 / S288c) (Baker's yeast) protein is Protein FMP16, mitochondrial (FMP16).